The chain runs to 618 residues: DNA mismatch repair protein MutL (618 aa).

Positions 371–401 (AREPATPRYSGGASGGSGGRQSVGGWSHAQP) are disordered. Over residues 382–392 (GASGGSGGRQS) the composition is skewed to gly residues.

This sequence belongs to the DNA mismatch repair MutL/HexB family.

This protein is involved in the repair of mismatches in DNA. It is required for dam-dependent methyl-directed DNA mismatch repair. May act as a 'molecular matchmaker', a protein that promotes the formation of a stable complex between two or more DNA-binding proteins in an ATP-dependent manner without itself being part of a final effector complex. This is DNA mismatch repair protein MutL from Salmonella arizonae (strain ATCC BAA-731 / CDC346-86 / RSK2980).